A 53-amino-acid polypeptide reads, in one-letter code: Rubredoxin-1 (53 aa).

The Rubredoxin-like domain maps to 1 to 53; it reads MEKFVCDVCGYIYDPVVGDPDNGVAPGTKFKDIPDTWVCPLCKLDKTHFSKVE. Positions 6, 9, 39, and 42 each coordinate Fe cation.

Belongs to the rubredoxin family. It depends on Fe(3+) as a cofactor.

In terms of biological role, rubredoxin is a small nonheme, iron protein lacking acid-labile sulfide. Its single Fe, chelated to 4 Cys, functions as an electron acceptor and may also stabilize the conformation of the molecule. In Clostridium perfringens (strain 13 / Type A), this protein is Rubredoxin-1 (rubR1).